We begin with the raw amino-acid sequence, 448 residues long: Probable glucuronoxylan glucuronosyltransferase IRX7 (448 aa).

Residues 1-16 (MTTHKHRRTEKNLCFK) are Cytoplasmic-facing. The chain crosses the membrane as a helical; Signal-anchor for type II membrane protein span at residues 17-37 (QYYKWILCFILTLYFFASFFV). At 38–448 (DHDQDHRSST…RSVRRSNSFL (411 aa)) the chain is on the lumenal side. 5 N-linked (GlcNAc...) asparagine glycosylation sites follow: N157, N189, N287, N397, and N438.

It belongs to the glycosyltransferase 47 family. In terms of tissue distribution, expressed in developing interfascicular fibers and xylem cells in stems and developing secondary xylem in roots.

The protein resides in the golgi apparatus membrane. In terms of biological role, involved in the synthesis of the hemicellulose glucuronoxylan, a major component of secondary cell walls. Probably involved in the synthesis of the glycosyl sequence at the glucuronoxylan reducing end. The sequence is that of Probable glucuronoxylan glucuronosyltransferase IRX7 (IRX7) from Arabidopsis thaliana (Mouse-ear cress).